The following is a 159-amino-acid chain: RNA pyrophosphohydrolase (159 aa).

The Nudix hydrolase domain occupies 6–149; it reads GFRPNVGIIL…KREVYRRALK (144 aa). The Nudix box motif lies at 38-59; the sequence is GGINPDETPEDALYRELNEEVG.

The protein belongs to the Nudix hydrolase family. RppH subfamily. A divalent metal cation is required as a cofactor.

In terms of biological role, accelerates the degradation of transcripts by removing pyrophosphate from the 5'-end of triphosphorylated RNA, leading to a more labile monophosphorylated state that can stimulate subsequent ribonuclease cleavage. This Pseudomonas fluorescens (strain ATCC BAA-477 / NRRL B-23932 / Pf-5) protein is RNA pyrophosphohydrolase.